The following is a 333-amino-acid chain: NADH-quinone oxidoreductase subunit H (333 aa).

8 helical membrane-spanning segments follow: residues 15-35 (LVIF…FVTY), 88-108 (FILA…TLPF), 117-137 (IGVG…GVVA), 159-179 (ISYE…TGSL), 191-211 (VWYI…AVAE), 250-270 (LFAM…PVMF), 273-293 (FIPG…VLIW), and 313-333 (VLFP…ELFF).

Belongs to the complex I subunit 1 family. In terms of assembly, NDH-1 is composed of 14 different subunits. Subunits NuoA, H, J, K, L, M, N constitute the membrane sector of the complex.

The protein localises to the cell membrane. It carries out the reaction a quinone + NADH + 5 H(+)(in) = a quinol + NAD(+) + 4 H(+)(out). In terms of biological role, NDH-1 shuttles electrons from NADH, via FMN and iron-sulfur (Fe-S) centers, to quinones in the respiratory chain. The immediate electron acceptor for the enzyme in this species is believed to be ubiquinone. Couples the redox reaction to proton translocation (for every two electrons transferred, four hydrogen ions are translocated across the cytoplasmic membrane), and thus conserves the redox energy in a proton gradient. This subunit may bind ubiquinone. The polypeptide is NADH-quinone oxidoreductase subunit H (Geobacillus sp. (strain WCH70)).